Consider the following 708-residue polypeptide: Metabotropic glutamate receptor-like protein L (708 aa).

An N-terminal signal peptide occupies residues 1–24 (MKLIIKNLILLLVSCLYFLSNVSC). 4 N-linked (GlcNAc...) asparagine glycosylation sites follow: N21, N235, N310, and N366. Residues 25 to 370 (DQEVHMALLL…TTGSINKTFM (346 aa)) lie on the Extracellular side of the membrane. A helical transmembrane segment spans residues 371–391 (AVSILEMAICLIIGIIVIFFF). Residues 392-401 (SRNINIIYST) lie on the Cytoplasmic side of the membrane. A helical membrane pass occupies residues 402–422 (IPYCLTILLGASLIAVAIFLW). Residues 423-435 (NLRDLNTQICTSK) are Extracellular-facing. The helical transmembrane segment at 436–456 (IWMASLGYNVLIGFIIIKSSL) threads the bilayer. The Cytoplasmic portion of the chain corresponds to 457 to 479 (IYFKFKEMVKSKNEKISPIPFGR). Residues 480–500 (IVLWFVPLLIIDCVLLIIYST) traverse the membrane as a helical segment. Over 501 to 531 (SGNPGKIDSLGLDGIGRYEYTQNCVNNLTGD) the chain is Extracellular. N-linked (GlcNAc...) asparagine glycosylation occurs at N527. Residues 532–552 (IILYIILVFHGLQLLYGCVIA) form a helical membrane-spanning segment. Over 553–568 (WKTRVIDLEEFIEAHD) the chain is Cytoplasmic. Residues 569 to 589 (FATAIYLITFCSFIIVILMVG) form a helical membrane-spanning segment. The Extracellular segment spans residues 590–597 (VTSTSNRN). Residues 598-618 (TIISACAIFSSFSCVLIIFGA) form a helical membrane-spanning segment. The Cytoplasmic portion of the chain corresponds to 619 to 708 (KFWKIYKPVE…SSRAAAQNDN (90 aa)). The tract at residues 638-681 (KPQKSYSGSGGSGNSSGSKSKKTSAHSSTSGVKSGTSAPTQTSQ) is disordered. Positions 669 to 681 (VKSGTSAPTQTSQ) are enriched in polar residues.

The protein in the N-terminal section; belongs to the BMP lipoprotein family. It in the C-terminal section; belongs to the G-protein coupled receptor 3 family. GABA-B receptor subfamily.

The protein resides in the membrane. This Dictyostelium discoideum (Social amoeba) protein is Metabotropic glutamate receptor-like protein L (far1).